The following is a 97-amino-acid chain: Single insulin-like growth factor-binding domain protein-1 (97 aa).

The signal sequence occupies residues 1–19 (MKTLFVFAVGIMLSMRASA). The IGFBP N-terminal domain occupies 20–96 (FTCPECRPEL…PEIVGTCVKI (77 aa)). O-linked (GalNAc...) threonine glycosylation is present at Thr-21. 6 disulfide bridges follow: Cys-22/Cys-45, Cys-25/Cys-47, Cys-30/Cys-48, Cys-36/Cys-51, Cys-59/Cys-75, and Cys-69/Cys-93.

In terms of tissue distribution, expressed in hemocytes.

The protein localises to the secreted. Functionally, has a role in the innate immune system. The sequence is that of Single insulin-like growth factor-binding domain protein-1 from Cupiennius salei (American wandering spider).